Reading from the N-terminus, the 199-residue chain is NAD(P)H dehydrogenase (quinone) (199 aa).

The 187-residue stretch at 4–190 (VLVLYYSSWG…DGARFQGRHV (187 aa)) folds into the Flavodoxin-like domain. Residues 10 to 15 (SSWGHV) and 78 to 80 (TRY) each bind FMN. Trp12 lines the NAD(+) pocket. Position 98 (Trp98) interacts with substrate. Residues 113 to 119 (STASQHG) and His134 contribute to the FMN site.

The protein belongs to the WrbA family. Requires FMN as cofactor.

It catalyses the reaction a quinone + NADH + H(+) = a quinol + NAD(+). It carries out the reaction a quinone + NADPH + H(+) = a quinol + NADP(+). This Methylorubrum extorquens (strain CM4 / NCIMB 13688) (Methylobacterium extorquens) protein is NAD(P)H dehydrogenase (quinone).